A 549-amino-acid chain; its full sequence is NADH-quinone oxidoreductase subunit N (549 aa).

A run of 14 helical transmembrane segments spans residues 26 to 46 (LSPL…EAFV), 57 to 77 (ALAM…VGAL), 96 to 116 (PSLF…LLIA), 148 to 168 (HTEV…FTAA), 171 to 191 (FLTM…LCGL), 206 to 226 (YFLL…MVYG), 253 to 273 (LLIG…TVPF), 297 to 317 (LVAA…TTVA), 321 to 341 (PMLW…AVTQ), 347 to 367 (LLAY…VAAN), 375 to 395 (MFYL…VTLV), 421 to 441 (AASL…SGFI), 466 to 486 (SAVT…AEPA), and 496 to 516 (GILT…LGIL).

Belongs to the complex I subunit 2 family. As to quaternary structure, NDH-1 is composed of 14 different subunits. Subunits NuoA, H, J, K, L, M, N constitute the membrane sector of the complex.

Its subcellular location is the cell membrane. It carries out the reaction a quinone + NADH + 5 H(+)(in) = a quinol + NAD(+) + 4 H(+)(out). Its function is as follows. NDH-1 shuttles electrons from NADH, via FMN and iron-sulfur (Fe-S) centers, to quinones in the respiratory chain. The immediate electron acceptor for the enzyme in this species is believed to be a menaquinone. Couples the redox reaction to proton translocation (for every two electrons transferred, four hydrogen ions are translocated across the cytoplasmic membrane), and thus conserves the redox energy in a proton gradient. In Thermobifida fusca (strain YX), this protein is NADH-quinone oxidoreductase subunit N.